Consider the following 178-residue polypeptide: Cytochrome b6-f complex iron-sulfur subunit (178 aa).

Residues 20–42 traverse the membrane as a helical segment; the sequence is LLTFGTATGVALGALYPVANYFM. Positions 65–161 constitute a Rieske domain; the sequence is KTGWLANHQA…VDVDDDAVLV (97 aa). Positions 107, 109, 125, and 128 each coordinate [2Fe-2S] cluster. A disulfide bridge links Cys112 with Cys127.

Belongs to the Rieske iron-sulfur protein family. The 4 large subunits of the cytochrome b6-f complex are cytochrome b6, subunit IV (17 kDa polypeptide, PetD), cytochrome f and the Rieske protein, while the 4 small subunits are PetG, PetL, PetM and PetN. The complex functions as a dimer. It depends on [2Fe-2S] cluster as a cofactor.

It localises to the cellular thylakoid membrane. The catalysed reaction is 2 oxidized [plastocyanin] + a plastoquinol + 2 H(+)(in) = 2 reduced [plastocyanin] + a plastoquinone + 4 H(+)(out). Functionally, component of the cytochrome b6-f complex, which mediates electron transfer between photosystem II (PSII) and photosystem I (PSI), cyclic electron flow around PSI, and state transitions. The polypeptide is Cytochrome b6-f complex iron-sulfur subunit (Prochlorococcus marinus (strain MIT 9515)).